A 218-amino-acid polypeptide reads, in one-letter code: Ribose-5-phosphate isomerase A (218 aa).

Substrate is bound by residues 28-31, 81-84, and 94-97; these read SGST, DGAD, and KGKG. Glutamate 103 acts as the Proton acceptor in catalysis. Residue lysine 121 coordinates substrate.

The protein belongs to the ribose 5-phosphate isomerase family. As to quaternary structure, homodimer.

It carries out the reaction aldehydo-D-ribose 5-phosphate = D-ribulose 5-phosphate. It functions in the pathway carbohydrate degradation; pentose phosphate pathway; D-ribose 5-phosphate from D-ribulose 5-phosphate (non-oxidative stage): step 1/1. Its function is as follows. Catalyzes the reversible conversion of ribose-5-phosphate to ribulose 5-phosphate. The sequence is that of Ribose-5-phosphate isomerase A from Wigglesworthia glossinidia brevipalpis.